Consider the following 290-residue polypeptide: 4-hydroxybenzoate octaprenyltransferase (290 aa).

The next 7 membrane-spanning stretches (helical) occupy residues leucine 33–valine 53, leucine 99–isoleucine 119, leucine 141–valine 161, glutamate 163–tyrosine 183, phenylalanine 213–asparagine 233, tryptophan 237–isoleucine 257, and alanine 268–tryptophan 288.

The protein belongs to the UbiA prenyltransferase family. Requires Mg(2+) as cofactor.

Its subcellular location is the cell inner membrane. The enzyme catalyses all-trans-octaprenyl diphosphate + 4-hydroxybenzoate = 4-hydroxy-3-(all-trans-octaprenyl)benzoate + diphosphate. It functions in the pathway cofactor biosynthesis; ubiquinone biosynthesis. Functionally, catalyzes the prenylation of para-hydroxybenzoate (PHB) with an all-trans polyprenyl group. Mediates the second step in the final reaction sequence of ubiquinone-8 (UQ-8) biosynthesis, which is the condensation of the polyisoprenoid side chain with PHB, generating the first membrane-bound Q intermediate 3-octaprenyl-4-hydroxybenzoate. This chain is 4-hydroxybenzoate octaprenyltransferase, found in Escherichia fergusonii (strain ATCC 35469 / DSM 13698 / CCUG 18766 / IAM 14443 / JCM 21226 / LMG 7866 / NBRC 102419 / NCTC 12128 / CDC 0568-73).